Reading from the N-terminus, the 302-residue chain is Acetaldehyde dehydrogenase 2 (302 aa).

The active-site Acyl-thioester intermediate is the cysteine 130. Residues 161–169 (SVGPGTRRN) and asparagine 272 contribute to the NAD(+) site.

The protein belongs to the acetaldehyde dehydrogenase family.

The enzyme catalyses acetaldehyde + NAD(+) + CoA = acetyl-CoA + NADH + H(+). In Cupriavidus necator (strain ATCC 17699 / DSM 428 / KCTC 22496 / NCIMB 10442 / H16 / Stanier 337) (Ralstonia eutropha), this protein is Acetaldehyde dehydrogenase 2.